The primary structure comprises 267 residues: N-acetylgalactosamine permease IIC component 1 (267 aa).

Residues 1–10 (MHEITLLQGL) lie on the Periplasmic side of the membrane. Residues 1 to 237 (MHEITLLQGL…VAVLGAGFAV (237 aa)) form the PTS EIIC type-4 domain. The helical transmembrane segment at 11–31 (SLAALVFVLGIDFWLEALFLF) threads the bilayer. At 32–33 (RP) the chain is on the cytoplasmic side. Residues 34–54 (IIVCTLTGAILGDIQTGLITG) form a helical membrane-spanning segment. Residues 55 to 66 (GLTELAFAGLTP) are Periplasmic-facing. The helical transmembrane segment at 67–87 (AGGVQPPNPIMAGLMTTVIAW) threads the bilayer. Over 88-94 (STGVDAK) the chain is Cytoplasmic. A helical transmembrane segment spans residues 95 to 115 (TAIGLGLPFSLLMQYVILFFY). Topologically, residues 116–141 (SAFSLFMTKADKCAKEADTAAFSRLN) are periplasmic. The helical transmembrane segment at 142–162 (WTTMLIVASAYAVIAFLCTYL) threads the bilayer. Over 163–177 (AQGAMQALVKAMPAW) the chain is Cytoplasmic. A helical transmembrane segment spans residues 178-198 (LTHGFEVAGGILPAVGFGLLL). At 199–209 (RVMFKAQYIPY) the chain is on the periplasmic side. Residues 210–230 (LIAGFLFVCYIQVSNLLPVAV) traverse the membrane as a helical segment. At 231–267 (LGAGFAVYEFFNAKSRQQAQPQPVASKNEEEDYSNGI) the chain is on the cytoplasmic side.

The protein localises to the cell inner membrane. The phosphoenolpyruvate-dependent sugar phosphotransferase system (PTS), a major carbohydrate active -transport system, catalyzes the phosphorylation of incoming sugar substrates concomitant with their translocation across the cell membrane. This system is involved in N-acetylgalactosamine transport. The polypeptide is N-acetylgalactosamine permease IIC component 1 (agaC) (Escherichia coli (strain K12)).